A 706-amino-acid chain; its full sequence is uncharacterized protein (706 aa).

Coiled coils occupy residues 86–162 (TKNV…AKKI), 269–299 (DYLK…VNEL), and 337–427 (DDYI…QSDY).

This is an uncharacterized protein from Staphylococcus aureus (strain MRSA252).